A 496-amino-acid polypeptide reads, in one-letter code: Glycerol kinase (496 aa).

Threonine 12 lines the ADP pocket. 3 residues coordinate ATP: threonine 12, threonine 13, and serine 14. Threonine 12 provides a ligand contact to sn-glycerol 3-phosphate. Residue arginine 16 participates in ADP binding. Sn-glycerol 3-phosphate is bound by residues arginine 82, glutamate 83, and tyrosine 134. Glycerol is bound by residues arginine 82, glutamate 83, and tyrosine 134. Histidine 230 is modified (phosphohistidine; by HPr). Aspartate 244 is a sn-glycerol 3-phosphate binding site. Glycerol contacts are provided by aspartate 244 and glutamine 245. Residues threonine 266 and glycine 309 each contribute to the ADP site. 4 residues coordinate ATP: threonine 266, glycine 309, glutamine 313, and glycine 410. ADP-binding residues include glycine 410 and asparagine 414.

The protein belongs to the FGGY kinase family. In terms of assembly, homotetramer and homodimer (in equilibrium). The phosphoenolpyruvate-dependent sugar phosphotransferase system (PTS), including enzyme I, and histidine-containing protein (HPr) are required for the phosphorylation, which leads to the activation of the enzyme.

The catalysed reaction is glycerol + ATP = sn-glycerol 3-phosphate + ADP + H(+). It functions in the pathway polyol metabolism; glycerol degradation via glycerol kinase pathway; sn-glycerol 3-phosphate from glycerol: step 1/1. With respect to regulation, activated by phosphorylation and inhibited by fructose 1,6-bisphosphate (FBP). In terms of biological role, key enzyme in the regulation of glycerol uptake and metabolism. Catalyzes the phosphorylation of glycerol to yield sn-glycerol 3-phosphate. The polypeptide is Glycerol kinase (Bacillus thuringiensis subsp. konkukian (strain 97-27)).